A 133-amino-acid polypeptide reads, in one-letter code: ATP synthase epsilon chain (133 aa).

Belongs to the ATPase epsilon chain family. As to quaternary structure, F-type ATPases have 2 components, CF(1) - the catalytic core - and CF(0) - the membrane proton channel. CF(1) has five subunits: alpha(3), beta(3), gamma(1), delta(1), epsilon(1). CF(0) has three main subunits: a, b and c.

It is found in the cell membrane. Functionally, produces ATP from ADP in the presence of a proton gradient across the membrane. This chain is ATP synthase epsilon chain, found in Clostridium botulinum (strain 657 / Type Ba4).